The following is a 447-amino-acid chain: GTPase Der (447 aa).

2 EngA-type G domains span residues 3–167 and 180–353; these read PVIA…ALPE and IRLA…KSAN. Residues 9 to 16, 56 to 60, 119 to 122, 186 to 193, 233 to 237, and 298 to 301 contribute to the GTP site; these read GRPNVGKS, DTGGF, NKAE, DTAGL, and NKWD. The KH-like domain occupies 354-438; that stretch reads RKMPTPVLTR…PLRIEMKTSS (85 aa).

It belongs to the TRAFAC class TrmE-Era-EngA-EngB-Septin-like GTPase superfamily. EngA (Der) GTPase family. In terms of assembly, associates with the 50S ribosomal subunit.

Functionally, GTPase that plays an essential role in the late steps of ribosome biogenesis. This chain is GTPase Der, found in Acidovorax ebreus (strain TPSY) (Diaphorobacter sp. (strain TPSY)).